The sequence spans 340 residues: MRVYYDRDCDVNLIKEKKVAILGYGSQGHAHALNLRDSGAKNLVIALREGSPSAKKAEAEGLQVMGIAEAAAWCDVIMFTMPDELQAETYKKYVHDNIKPGAAIAFAHGLNVHFGLIEPKEGVDVIMMAPKGPGHTVRGEYTKGGGVPCLVAVHNDASGSALETALSYCSAIGGGRSGIIETNFREECETDLFGEQAVLCGGLVELIRCGFETLVEAGYAPEMAYFECLHEVKLIVDLIYEGGIANMDYSISNTAEYGQYVTGPRILKYDETKARMKEVLADIQQGKFVRDFMLENAVGQPTIKASRRANDEHAIEATGAKLREMMPWISAGKMVDKSKN.

Positions 1-182 (MRVYYDRDCD…GGGRSGIIET (182 aa)) constitute a KARI N-terminal Rossmann domain. NADP(+) is bound by residues 24-27 (YGSQ), R48, S51, S53, and 83-86 (DELQ). The active site involves H108. An NADP(+)-binding site is contributed by G134. One can recognise a KARI C-terminal knotted domain in the interval 183–329 (NFREECETDL…AKLREMMPWI (147 aa)). Residues D191, E195, E227, and E231 each coordinate Mg(2+). A substrate-binding site is contributed by S252.

It belongs to the ketol-acid reductoisomerase family. It depends on Mg(2+) as a cofactor.

It carries out the reaction (2R)-2,3-dihydroxy-3-methylbutanoate + NADP(+) = (2S)-2-acetolactate + NADPH + H(+). The enzyme catalyses (2R,3R)-2,3-dihydroxy-3-methylpentanoate + NADP(+) = (S)-2-ethyl-2-hydroxy-3-oxobutanoate + NADPH + H(+). It functions in the pathway amino-acid biosynthesis; L-isoleucine biosynthesis; L-isoleucine from 2-oxobutanoate: step 2/4. The protein operates within amino-acid biosynthesis; L-valine biosynthesis; L-valine from pyruvate: step 2/4. Involved in the biosynthesis of branched-chain amino acids (BCAA). Catalyzes an alkyl-migration followed by a ketol-acid reduction of (S)-2-acetolactate (S2AL) to yield (R)-2,3-dihydroxy-isovalerate. In the isomerase reaction, S2AL is rearranged via a Mg-dependent methyl migration to produce 3-hydroxy-3-methyl-2-ketobutyrate (HMKB). In the reductase reaction, this 2-ketoacid undergoes a metal-dependent reduction by NADPH to yield (R)-2,3-dihydroxy-isovalerate. This Ruegeria sp. (strain TM1040) (Silicibacter sp.) protein is Ketol-acid reductoisomerase (NADP(+)).